We begin with the raw amino-acid sequence, 369 residues long: Flagellar P-ring protein (369 aa).

The signal sequence occupies residues 1–24; that stretch reads MSKTISLLKFIICILISLCSFTYA.

The protein belongs to the FlgI family. In terms of assembly, the basal body constitutes a major portion of the flagellar organelle and consists of four rings (L,P,S, and M) mounted on a central rod.

It is found in the bacterial flagellum basal body. In terms of biological role, assembles around the rod to form the L-ring and probably protects the motor/basal body from shearing forces during rotation. This is Flagellar P-ring protein from Buchnera aphidicola subsp. Schizaphis graminum (strain Sg).